Reading from the N-terminus, the 177-residue chain is Large ribosomal subunit protein uL6 (177 aa).

The protein belongs to the universal ribosomal protein uL6 family. In terms of assembly, part of the 50S ribosomal subunit.

This protein binds to the 23S rRNA, and is important in its secondary structure. It is located near the subunit interface in the base of the L7/L12 stalk, and near the tRNA binding site of the peptidyltransferase center. This chain is Large ribosomal subunit protein uL6, found in Rickettsia rickettsii (strain Iowa).